Here is a 267-residue protein sequence, read N- to C-terminus: Triosephosphate isomerase (267 aa).

12–14 is a substrate binding site; it reads NWK. The active-site Electrophile is H104. Catalysis depends on E176, which acts as the Proton acceptor. Substrate-binding positions include G182, S222, and 243-244; that span reads GG.

The protein belongs to the triosephosphate isomerase family. In terms of assembly, homodimer.

It is found in the cytoplasm. The enzyme catalyses D-glyceraldehyde 3-phosphate = dihydroxyacetone phosphate. The protein operates within carbohydrate biosynthesis; gluconeogenesis. It participates in carbohydrate degradation; glycolysis; D-glyceraldehyde 3-phosphate from glycerone phosphate: step 1/1. Its function is as follows. Involved in the gluconeogenesis. Catalyzes stereospecifically the conversion of dihydroxyacetone phosphate (DHAP) to D-glyceraldehyde-3-phosphate (G3P). The polypeptide is Triosephosphate isomerase (Bifidobacterium longum (strain DJO10A)).